We begin with the raw amino-acid sequence, 204 residues long: Large ribosomal subunit protein mL67 (204 aa).

Belongs to the mitochondrion-specific ribosomal protein mL67 family.

Its subcellular location is the nucleus. It is found in the mitochondrion. Transcription factor involved in regulation of RNA polymerase II-dependent transcription. Also involved in regulation of mitochondrial DNA recombination, maintenance and repair, and generation of homoplasmic cells. This is Large ribosomal subunit protein mL67 (MHR1) from Yarrowia lipolytica (strain CLIB 122 / E 150) (Yeast).